Reading from the N-terminus, the 322-residue chain is Ribosomal RNA small subunit methyltransferase H (322 aa).

Residues 43 to 45 (GGY), aspartate 60, phenylalanine 86, aspartate 104, and glutamine 111 each bind S-adenosyl-L-methionine.

The protein belongs to the methyltransferase superfamily. RsmH family.

Its subcellular location is the cytoplasm. It carries out the reaction cytidine(1402) in 16S rRNA + S-adenosyl-L-methionine = N(4)-methylcytidine(1402) in 16S rRNA + S-adenosyl-L-homocysteine + H(+). Its function is as follows. Specifically methylates the N4 position of cytidine in position 1402 (C1402) of 16S rRNA. The chain is Ribosomal RNA small subunit methyltransferase H from Caulobacter sp. (strain K31).